Consider the following 227-residue polypeptide: (S)-2-haloacid dehalogenase (227 aa).

Asp10 acts as the Nucleophile in catalysis. Residues 11–12, Arg41, and 118–119 each bind an (S)-2-haloacid; these read LY and SN. Residues 175–180 form an important for catalytic activity region; sequence SSNAWD.

It belongs to the HAD-like hydrolase superfamily. S-2-haloalkanoic acid dehalogenase family.

It catalyses the reaction an (S)-2-haloacid + H2O = a (2R)-2-hydroxycarboxylate + a halide anion + H(+). The enzyme catalyses (S)-2-chloropropanoate + H2O = (R)-lactate + chloride + H(+). Functionally, catalyzes the hydrolytic dehalogenation of small (S)-2-haloalkanoic acids to yield the corresponding (R)-2-hydroxyalkanoic acids. Acts on acids of short chain lengths, C(2) to C(4), with inversion of configuration at C-2. Active with 2-halogenated carboxylic acids and converts only the S-isomer (or L-isomer) of 2-chloropropionic acid with inversion of configuration to produce R-lactate (or D-isomer). The sequence is that of (S)-2-haloacid dehalogenase (dhl VII) from Pseudomonas fluorescens.